Reading from the N-terminus, the 312-residue chain is 3-methyl-2-oxobutanoate hydroxymethyltransferase (312 aa).

This sequence belongs to the PanB family.

The catalysed reaction is 3-methyl-2-oxobutanoate + (6R)-5,10-methylene-5,6,7,8-tetrahydrofolate + H2O = 2-dehydropantoate + (6S)-5,6,7,8-tetrahydrofolate. Its pathway is cofactor biosynthesis; (R)-pantothenate biosynthesis; (R)-pantoate from 3-methyl-2-oxobutanoate: step 1/2. Functionally, probable 3-methyl-2-oxobutanoate hydroxymethyltransferase required for pantothenic acid biosynthesis. Acts downstream in the pantothenic acid pathway. This Saccharomyces cerevisiae (strain ATCC 204508 / S288c) (Baker's yeast) protein is 3-methyl-2-oxobutanoate hydroxymethyltransferase.